The primary structure comprises 366 residues: tRNA/tmRNA (uracil-C(5))-methyltransferase (366 aa).

The S-adenosyl-L-methionine site is built by Q190, Y218, N223, E239, and D299. Residue C324 is the Nucleophile of the active site. E358 serves as the catalytic Proton acceptor.

It belongs to the class I-like SAM-binding methyltransferase superfamily. RNA M5U methyltransferase family. TrmA subfamily.

It carries out the reaction uridine(54) in tRNA + S-adenosyl-L-methionine = 5-methyluridine(54) in tRNA + S-adenosyl-L-homocysteine + H(+). The catalysed reaction is uridine(341) in tmRNA + S-adenosyl-L-methionine = 5-methyluridine(341) in tmRNA + S-adenosyl-L-homocysteine + H(+). In terms of biological role, dual-specificity methyltransferase that catalyzes the formation of 5-methyluridine at position 54 (m5U54) in all tRNAs, and that of position 341 (m5U341) in tmRNA (transfer-mRNA). The polypeptide is tRNA/tmRNA (uracil-C(5))-methyltransferase (Cellvibrio japonicus (strain Ueda107) (Pseudomonas fluorescens subsp. cellulosa)).